Consider the following 207-residue polypeptide: ATP synthase subunit b 2 (207 aa).

A helical membrane pass occupies residues 53-72 (TYASQLLWLVITFGVFYLLM).

It belongs to the ATPase B chain family. As to quaternary structure, F-type ATPases have 2 components, F(1) - the catalytic core - and F(0) - the membrane proton channel. F(1) has five subunits: alpha(3), beta(3), gamma(1), delta(1), epsilon(1). F(0) has three main subunits: a(1), b(2) and c(10-14). The alpha and beta chains form an alternating ring which encloses part of the gamma chain. F(1) is attached to F(0) by a central stalk formed by the gamma and epsilon chains, while a peripheral stalk is formed by the delta and b chains.

It localises to the cell inner membrane. Functionally, f(1)F(0) ATP synthase produces ATP from ADP in the presence of a proton or sodium gradient. F-type ATPases consist of two structural domains, F(1) containing the extramembraneous catalytic core and F(0) containing the membrane proton channel, linked together by a central stalk and a peripheral stalk. During catalysis, ATP synthesis in the catalytic domain of F(1) is coupled via a rotary mechanism of the central stalk subunits to proton translocation. In terms of biological role, component of the F(0) channel, it forms part of the peripheral stalk, linking F(1) to F(0). The b'-subunit is a diverged and duplicated form of b found in plants and photosynthetic bacteria. This Rhizobium etli (strain ATCC 51251 / DSM 11541 / JCM 21823 / NBRC 15573 / CFN 42) protein is ATP synthase subunit b 2 (atpF2).